The sequence spans 270 residues: Protein-ADP-ribose hydrolase (270 aa).

The Macro domain maps to 73–267 (VSVKDCQKTN…LYDTYLQKEN (195 aa)). ADP-D-ribose contacts are provided by Asp92, Ile93, and Asn106. Zn(2+)-binding residues include Cys112, His117, and Cys119. Residues Cys119, Ile120, Asp121, Ser212, Thr213, Gly214, Glu215, and Phe216 each coordinate ADP-D-ribose.

This sequence belongs to the MacroD-type family. Zn-Macro subfamily. The cofactor is Zn(2+).

The catalysed reaction is 4-O-(ADP-D-ribosyl)-L-aspartyl-[protein] + H2O = L-aspartyl-[protein] + ADP-D-ribose + H(+). In terms of biological role, ADP-ribosylhydrolase that specifically reverses the SirTM-mediated mono-ADP-ribosylation at an asparatate residue of GcvH-L, by releasing ADP-ribose from the target protein. May play a role in the regulation of the response to host-induced oxidative stress. The chain is Protein-ADP-ribose hydrolase from Streptococcus pyogenes serotype M18 (strain MGAS8232).